A 65-amino-acid chain; its full sequence is Keratin-associated protein 23-1 (65 aa).

Interacts with hair keratins.

Its function is as follows. In the hair cortex, hair keratin intermediate filaments are embedded in an interfilamentous matrix, consisting of hair keratin-associated proteins (KRTAP), which are essential for the formation of a rigid and resistant hair shaft through their extensive disulfide bond cross-linking with abundant cysteine residues of hair keratins. The matrix proteins include the high-sulfur and high-glycine-tyrosine keratins. This chain is Keratin-associated protein 23-1 (KRTAP23-1), found in Homo sapiens (Human).